The sequence spans 227 residues: Small heat shock protein hspG3 (227 aa).

The 197-residue stretch at 31–227 folds into the sHSP domain; sequence NKRVDIIPSM…SSNTIKININ (197 aa). Positions 119–164 are disordered; that stretch reads QQQQLENSNKENDEPSIEEFEEDVKSKSELNKTTLNTTENKDEDKT.

Belongs to the small heat shock protein (HSP20) family.

In Dictyostelium discoideum (Social amoeba), this protein is Small heat shock protein hspG3 (hspG3).